The sequence spans 411 residues: Na(+)-translocating NADH-quinone reductase subunit F (411 aa).

A helical membrane pass occupies residues valine 5–isoleucine 25. In terms of domain architecture, 2Fe-2S ferredoxin-type spans glycine 36–isoleucine 130. Residues cysteine 73, cysteine 79, cysteine 82, and cysteine 114 each contribute to the [2Fe-2S] cluster site. The 141-residue stretch at valine 133–lysine 273 folds into the FAD-binding FR-type domain.

The protein belongs to the NqrF family. As to quaternary structure, composed of six subunits; NqrA, NqrB, NqrC, NqrD, NqrE and NqrF. Requires [2Fe-2S] cluster as cofactor. FAD serves as cofactor.

It is found in the cell inner membrane. The enzyme catalyses a ubiquinone + n Na(+)(in) + NADH + H(+) = a ubiquinol + n Na(+)(out) + NAD(+). NQR complex catalyzes the reduction of ubiquinone-1 to ubiquinol by two successive reactions, coupled with the transport of Na(+) ions from the cytoplasm to the periplasm. The first step is catalyzed by NqrF, which accepts electrons from NADH and reduces ubiquinone-1 to ubisemiquinone by a one-electron transfer pathway. The protein is Na(+)-translocating NADH-quinone reductase subunit F of Haemophilus influenzae (strain PittEE).